Reading from the N-terminus, the 637-residue chain is MGLLSQGSPLSWEETQRHADHVRRHGILQFLHIYHAVKDRHKDVLKWGDEVEYMLVSFDHENRKVQLLLNGGDVLETLQEKGERTNPNHPTLWRPEYGSYMIEGTPGQPYGGTMSEFNTVEANMRKRRKEATSVLGEHQALCTITSFPRLGCPGFTLPEHRPNPEEGGASKSLFFPDEAINKHPRFGTLTRNIRHRRGEKVVINVPIFKDKNTPSPFVETFPEDAEASKASQPDHIYMDAMGFGMGNCCLQVTFQACSISEARYLYDQLATICPIVMALSAASPFYRGYVSDIDCRWGVISASVDDRTREERGLEPLKNNRFRISKSRYDSIDSYLSKCGEKYNDIDLTIDKEIYEQLLEEGIDHLLAQHVAHLFIRDPLTLFEEKIHLDDANESDHFENIQSTNWQTMRFKPPPPNSDIGWRVEFRPMEVQLTDFENSAYVVFVVLLTRVILSYKLDFLIPLSKVDENMKVAQKRDAVLQGMFYFRKDICKGGNAVVDGCSKAQSSSEPAAEEYTLMSIDTIINGKEGVFPGLIPILNSYLENMEVDVDTRCSILNYLKLIKKRASGELMTVARWMREFIANHPDYKQDSVITDEINYSLIWKCNQIADELCECPELLGSGFRKAKYSGGKSDPSA.

Position 1 is an N-acetylmethionine (M1). 2 positions are modified to phosphoserine: S5 and S8.

Belongs to the glutamate--cysteine ligase type 3 family. Heterodimer of a catalytic heavy chain and a regulatory light chain.

The catalysed reaction is L-cysteine + L-glutamate + ATP = gamma-L-glutamyl-L-cysteine + ADP + phosphate + H(+). The enzyme catalyses (2S)-2-aminobutanoate + L-glutamate + ATP = gamma-L-glutamyl-(2S)-2-aminobutanoate + ADP + phosphate + H(+). It participates in sulfur metabolism; glutathione biosynthesis; glutathione from L-cysteine and L-glutamate: step 1/2. With respect to regulation, feedback inhibition by glutathione. Its function is as follows. Catalyzes the ATP-dependent ligation of L-glutamate and L-cysteine and participates in the first and rate-limiting step in glutathione biosynthesis. The protein is Glutamate--cysteine ligase catalytic subunit of Mus musculus (Mouse).